The following is a 558-amino-acid chain: Suppressor of zyg-1 protein 20 (558 aa).

The region spanning 45 to 146 is the SUZ domain; it reads KVKAEESSGV…ARNRILGTEY (102 aa). 3 disordered regions span residues 50-132, 205-241, and 374-558; these read ESSG…ERQA, FTQPPPSVSESGGVYNGPPGFQQKQPNFQPTLQQQSL, and QRNQ…NRPQ. Over residues 69–81 the composition is skewed to basic and acidic residues; sequence EEPKRVFLRRPKD. The segment covering 94–109 has biased composition (polar residues); that stretch reads PPTSADTEEQPVTNVR. Residues 117–131 are compositionally biased toward basic and acidic residues; sequence NQKEKQPAPTYEERQ. Composition is skewed to low complexity over residues 374–394 and 424–477; these read QRNQVNSYPQQNGAGRGQNRQ and NNGQ…QQQQ. Composition is skewed to polar residues over residues 478–508 and 545–558; these read NKSGKFGQNRNDMQKNNYQPNLQQPPMSQNP and SASQWPALQQNRPQ.

As to quaternary structure, interacts (via C-terminus) with atx-2 (via C-terminus); the interaction is RNA independent. Interacts with let-92. In terms of processing, phosphorylated. May be dephosphorylated by let-92.

It is found in the cytoplasm. Its subcellular location is the cytoskeleton. The protein localises to the microtubule organizing center. The protein resides in the centrosome. It localises to the centriole. It is found in the nucleus. Its subcellular location is the nucleolus. The protein localises to the chromosome. In terms of biological role, RNA binding protein that is required for normal cell division and cytokinesis during embryonic development. Functions with RNA-binding protein atx-2 to ensure embryonic cell division, and to this end, plays a role in the regulation of centrosome assembly, position and size, and in astral microtubule outgrowth and nucleation. Furthermore, negatively regulates the levels of the protein kinase zyg-1 at the centrosome. Also involved in ensuring centrosome attachment to the nuclear envelope. This chain is Suppressor of zyg-1 protein 20, found in Caenorhabditis elegans.